The sequence spans 269 residues: Cytochrome c oxidase subunit 3 (269 aa).

The next 7 helical transmembrane spans lie at 21–41 (PWPIVVSFSLLSLALSLALAM), 45–65 (IGNMNLVWLALFVLTSSATLW), 90–110 (GFLLFVVSEVLIFAGLFWAYF), 138–160 (PLLNTIILLASGATVTYSHHALI), 167–187 (ALSGLFITTWLIIIFVICQYI), 205–225 (FYAGTGLHFLHMVMLATMLAI), and 247–267 (VIYLHVLDIIWLFLYIVFYWW).

It belongs to the cytochrome c oxidase subunit 3 family. Component of the cytochrome c oxidase (complex IV, CIV), a multisubunit enzyme composed of a catalytic core of 3 subunits and several supernumerary subunits. The complex exists as a monomer or a dimer and forms supercomplexes (SCs) in the inner mitochondrial membrane with ubiquinol-cytochrome c oxidoreductase (cytochrome b-c1 complex, complex III, CIII).

It localises to the mitochondrion inner membrane. The catalysed reaction is 4 Fe(II)-[cytochrome c] + O2 + 8 H(+)(in) = 4 Fe(III)-[cytochrome c] + 2 H2O + 4 H(+)(out). In terms of biological role, component of the cytochrome c oxidase, the last enzyme in the mitochondrial electron transport chain which drives oxidative phosphorylation. The respiratory chain contains 3 multisubunit complexes succinate dehydrogenase (complex II, CII), ubiquinol-cytochrome c oxidoreductase (cytochrome b-c1 complex, complex III, CIII) and cytochrome c oxidase (complex IV, CIV), that cooperate to transfer electrons derived from NADH and succinate to molecular oxygen, creating an electrochemical gradient over the inner membrane that drives transmembrane transport and the ATP synthase. Cytochrome c oxidase is the component of the respiratory chain that catalyzes the reduction of oxygen to water. Electrons originating from reduced cytochrome c in the intermembrane space (IMS) are transferred via the dinuclear copper A center (CU(A)) of subunit 2 and heme A of subunit 1 to the active site in subunit 1, a binuclear center (BNC) formed by heme A3 and copper B (CU(B)). The BNC reduces molecular oxygen to 2 water molecules using 4 electrons from cytochrome c in the IMS and 4 protons from the mitochondrial matrix. The chain is Cytochrome c oxidase subunit 3 (COX3) from Lachancea kluyveri (strain ATCC 58438 / CBS 3082 / BCRC 21498 / NBRC 1685 / JCM 7257 / NCYC 543 / NRRL Y-12651) (Yeast).